We begin with the raw amino-acid sequence, 112 residues long: uncharacterized protein (112 aa).

Helical transmembrane passes span 33–53 (PSPL…PFGA), 58–78 (LYIY…NVCT), and 91–111 (CVYV…LLFV).

It localises to the membrane. This is an uncharacterized protein from Saccharomyces cerevisiae (strain ATCC 204508 / S288c) (Baker's yeast).